The primary structure comprises 75 residues: UPF0512 protein C (75 aa).

It belongs to the UPF0512 family.

The sequence is that of UPF0512 protein C from Dictyostelium discoideum (Social amoeba).